A 552-amino-acid chain; its full sequence is FERRY endosomal RAB5 effector complex subunit 3 (552 aa).

Residue Ser-79 is modified to Phosphoserine.

As to quaternary structure, component of the FERRY complex composed of five subunits, TBCK, PPP1R21, FERRY3, CRYZL1 and GATD1 with a ratio of 1:2:1:2:4, respectively.

The protein localises to the cytoplasm. It is found in the early endosome. Component of the FERRY complex (Five-subunit Endosomal Rab5 and RNA/ribosome intermediary). The FERRY complex directly interacts with mRNAs and RAB5A, and functions as a RAB5A effector involved in the localization and the distribution of specific mRNAs most likely by mediating their endosomal transport. The complex recruits mRNAs and ribosomes to early endosomes through direct mRNA-interaction. Plays a role in mast cell degranulation. This Rattus norvegicus (Rat) protein is FERRY endosomal RAB5 effector complex subunit 3.